We begin with the raw amino-acid sequence, 117 residues long: UPF0102 protein Spro_4337 (117 aa).

Belongs to the UPF0102 family.

The sequence is that of UPF0102 protein Spro_4337 from Serratia proteamaculans (strain 568).